The chain runs to 606 residues: Elongation factor 4 (606 aa).

The tr-type G domain occupies 11–193 (PHIRNFSIIA…RLVRDVPPPK (183 aa)). GTP is bound by residues 23–28 (DHGKST) and 140–143 (NKMD).

Belongs to the TRAFAC class translation factor GTPase superfamily. Classic translation factor GTPase family. LepA subfamily.

Its subcellular location is the cell inner membrane. It catalyses the reaction GTP + H2O = GDP + phosphate + H(+). Its function is as follows. Required for accurate and efficient protein synthesis under certain stress conditions. May act as a fidelity factor of the translation reaction, by catalyzing a one-codon backward translocation of tRNAs on improperly translocated ribosomes. Back-translocation proceeds from a post-translocation (POST) complex to a pre-translocation (PRE) complex, thus giving elongation factor G a second chance to translocate the tRNAs correctly. Binds to ribosomes in a GTP-dependent manner. The protein is Elongation factor 4 of Chromohalobacter salexigens (strain ATCC BAA-138 / DSM 3043 / CIP 106854 / NCIMB 13768 / 1H11).